The following is a 561-amino-acid chain: 2-methylisocitrate lyase, mitochondrial (561 aa).

A disordered region spans residues 154-177 (KAQSMHDRKQWDTRRKMSPDERSK). The span at 157-177 (SMHDRKQWDTRRKMSPDERSK) shows a compositional bias: basic and acidic residues. Residue Cys-228 is part of the active site.

This sequence belongs to the isocitrate lyase/PEP mutase superfamily. Isocitrate lyase family. Mg(2+) is required as a cofactor.

The protein resides in the mitochondrion matrix. It catalyses the reaction (2S,3R)-3-hydroxybutane-1,2,3-tricarboxylate = pyruvate + succinate. Its pathway is organic acid metabolism; propanoate degradation. In terms of biological role, component of the methylcitrate cycle that catalyzes the formation of pyruvate and succinate from 2-methylisocitrate during the metabolism of endogenous propionyl-CoA. Plays an important role for growth and development, but also in antagonism, root colonization and induction of defense responses in plants. The protein is 2-methylisocitrate lyase, mitochondrial of Hypocrea atroviridis (strain ATCC 20476 / IMI 206040) (Trichoderma atroviride).